A 283-amino-acid chain; its full sequence is Elongation factor Ts (283 aa).

The involved in Mg(2+) ion dislocation from EF-Tu stretch occupies residues 79 to 82 (TDFV).

Belongs to the EF-Ts family.

It is found in the cytoplasm. Functionally, associates with the EF-Tu.GDP complex and induces the exchange of GDP to GTP. It remains bound to the aminoacyl-tRNA.EF-Tu.GTP complex up to the GTP hydrolysis stage on the ribosome. This is Elongation factor Ts from Pseudoalteromonas translucida (strain TAC 125).